The chain runs to 210 residues: Leucyl/phenylalanyl-tRNA--protein transferase (210 aa).

This sequence belongs to the L/F-transferase family.

The protein resides in the cytoplasm. The enzyme catalyses N-terminal L-lysyl-[protein] + L-leucyl-tRNA(Leu) = N-terminal L-leucyl-L-lysyl-[protein] + tRNA(Leu) + H(+). The catalysed reaction is N-terminal L-arginyl-[protein] + L-leucyl-tRNA(Leu) = N-terminal L-leucyl-L-arginyl-[protein] + tRNA(Leu) + H(+). It carries out the reaction L-phenylalanyl-tRNA(Phe) + an N-terminal L-alpha-aminoacyl-[protein] = an N-terminal L-phenylalanyl-L-alpha-aminoacyl-[protein] + tRNA(Phe). Functions in the N-end rule pathway of protein degradation where it conjugates Leu, Phe and, less efficiently, Met from aminoacyl-tRNAs to the N-termini of proteins containing an N-terminal arginine or lysine. The chain is Leucyl/phenylalanyl-tRNA--protein transferase from Deinococcus radiodurans (strain ATCC 13939 / DSM 20539 / JCM 16871 / CCUG 27074 / LMG 4051 / NBRC 15346 / NCIMB 9279 / VKM B-1422 / R1).